We begin with the raw amino-acid sequence, 233 residues long: 28 kDa ribonucleoprotein, chloroplastic (233 aa).

A compositionally biased stretch (polar residues) spans 1–16; sequence CVAQTSEWEQEGSTNA. Residues 1 to 52 form a disordered region; the sequence is CVAQTSEWEQEGSTNAVLEGESDPEGAVSWGSETQVSDEGGVEGGQGFSEPP. 2 consecutive RRM domains span residues 55–133 and 149–227; these read AKLF…KAAP and CRVY…VAEE.

It is found in the plastid. The protein resides in the chloroplast. In terms of biological role, probably involved in the 3'-end processing of chloroplast mRNA's. The protein is 28 kDa ribonucleoprotein, chloroplastic of Spinacia oleracea (Spinach).